Reading from the N-terminus, the 449-residue chain is Omega-amino acid--pyruvate aminotransferase (449 aa).

Substrate is bound at residue W60. 119–120 (GS) is a pyridoxal 5'-phosphate binding site. K288 carries the N6-(pyridoxal phosphate)lysine modification. T327 contacts pyridoxal 5'-phosphate. Positions 414 and 421 each coordinate substrate.

This sequence belongs to the class-III pyridoxal-phosphate-dependent aminotransferase family. As to quaternary structure, homotetramer. The cofactor is pyridoxal 5'-phosphate.

The enzyme catalyses 3-oxopropanoate + L-alanine = beta-alanine + pyruvate. Its function is as follows. Catalyzes transamination between a variety of omega-amino acids, mono and diamines, and pyruvate. Plays a pivotal role in the metabolism of the omega amino acids. The sequence is that of Omega-amino acid--pyruvate aminotransferase from Pseudomonas putida (Arthrobacter siderocapsulatus).